The primary structure comprises 617 residues: Putative type VI secretion system protein VgrGA (617 aa).

Disordered regions lie at residues Gly325–Asn344 and Arg449–Ser469.

This sequence belongs to the VgrG protein family.

A Vgr protein that is probably part of a type VI secretion system (T6SS). May be required for export of proteins involved in Rhs-mediated cellular contact-dependent growth inhibition (CDI). In Dickeya dadantii (strain 3937) (Erwinia chrysanthemi (strain 3937)), this protein is Putative type VI secretion system protein VgrGA (vgrGA).